The sequence spans 360 residues: MSFNTFGKQFRFTTWGESHGPALGCVVDGCPPNINLKEQDIQVELDKRKPGQSKFTTQRKEDDKVQILSGVFEGKTTGTPISLIIYNQDMRSKDYGDIKDKFRPGHADFTYFKKYGIRDYRGGGRSSARETAARVAAGAIAKKVLENKLGKKFKVVGAVTQLGILGCDTRKWNDLTINKNPFFCPDKNMLKLWEKYLLDIRKSGSSCGAVIEVRARGIPVGLGAPIYSKLDMDIASAMMSINAVKGVNIGSGMNSAQLSGEQNSDEISQKGKKLKFDSNNAGGILGGISTGQEIVVSFAVKPTSSILTTRKTINKFGKNTTISVKGRHDPCVGIRAVPVGEAMMNCVLLDHYLMNKAQCS.

R48 contacts NADP(+). Residues 125-127 (RSS), 242-243 (NA), G286, 301-305 (KPTSS), and R327 contribute to the FMN site.

Belongs to the chorismate synthase family. As to quaternary structure, homotetramer. Requires FMNH2 as cofactor.

The enzyme catalyses 5-O-(1-carboxyvinyl)-3-phosphoshikimate = chorismate + phosphate. It functions in the pathway metabolic intermediate biosynthesis; chorismate biosynthesis; chorismate from D-erythrose 4-phosphate and phosphoenolpyruvate: step 7/7. In terms of biological role, catalyzes the anti-1,4-elimination of the C-3 phosphate and the C-6 proR hydrogen from 5-enolpyruvylshikimate-3-phosphate (EPSP) to yield chorismate, which is the branch point compound that serves as the starting substrate for the three terminal pathways of aromatic amino acid biosynthesis. This reaction introduces a second double bond into the aromatic ring system. The sequence is that of Chorismate synthase from Pelagibacter ubique (strain HTCC1062).